The following is a 411-amino-acid chain: LL-diaminopimelate aminotransferase (411 aa).

2 residues coordinate substrate: Tyr-15 and Gly-42. Pyridoxal 5'-phosphate-binding positions include Tyr-72, 108–109 (AK), Tyr-132, Asn-187, Tyr-218, and 246–248 (SFS). Substrate contacts are provided by Lys-109, Tyr-132, and Asn-187. Position 249 is an N6-(pyridoxal phosphate)lysine (Lys-249). Pyridoxal 5'-phosphate contacts are provided by Arg-257 and Asn-292. 2 residues coordinate substrate: Asn-292 and Arg-388.

It belongs to the class-I pyridoxal-phosphate-dependent aminotransferase family. LL-diaminopimelate aminotransferase subfamily. Homodimer. Pyridoxal 5'-phosphate serves as cofactor.

The enzyme catalyses (2S,6S)-2,6-diaminopimelate + 2-oxoglutarate = (S)-2,3,4,5-tetrahydrodipicolinate + L-glutamate + H2O + H(+). It participates in amino-acid biosynthesis; L-lysine biosynthesis via DAP pathway; LL-2,6-diaminopimelate from (S)-tetrahydrodipicolinate (aminotransferase route): step 1/1. Its function is as follows. Involved in the synthesis of meso-diaminopimelate (m-DAP or DL-DAP), required for both lysine and peptidoglycan biosynthesis. Catalyzes the direct conversion of tetrahydrodipicolinate to LL-diaminopimelate. This Rippkaea orientalis (strain PCC 8801 / RF-1) (Cyanothece sp. (strain PCC 8801)) protein is LL-diaminopimelate aminotransferase.